A 306-amino-acid polypeptide reads, in one-letter code: Agmatinase (306 aa).

Residues H126, D149, H151, D153, D230, and D232 each contribute to the Mn(2+) site.

It belongs to the arginase family. Agmatinase subfamily. It depends on Mn(2+) as a cofactor.

It catalyses the reaction agmatine + H2O = urea + putrescine. It functions in the pathway amine and polyamine biosynthesis; putrescine biosynthesis via agmatine pathway; putrescine from agmatine: step 1/1. Its function is as follows. Catalyzes the formation of putrescine from agmatine. In Cronobacter sakazakii (strain ATCC BAA-894) (Enterobacter sakazakii), this protein is Agmatinase.